The following is a 372-amino-acid chain: Putative glutamate--cysteine ligase 2 (372 aa).

This sequence belongs to the glutamate--cysteine ligase type 2 family. YbdK subfamily. As to quaternary structure, homodimer.

It catalyses the reaction L-cysteine + L-glutamate + ATP = gamma-L-glutamyl-L-cysteine + ADP + phosphate + H(+). Its function is as follows. ATP-dependent carboxylate-amine ligase which exhibits weak glutamate--cysteine ligase activity. This is Putative glutamate--cysteine ligase 2 (ybdK) from Salmonella choleraesuis (strain SC-B67).